Reading from the N-terminus, the 150-residue chain is Cytochrome c oxidase subunit 5A, mitochondrial (150 aa).

The N-terminal 41 residues, 1–41, are a transit peptide targeting the mitochondrion; the sequence is MLGAALRRCAVAATTWAGPRGHLHSARTPGPAAAIQSVRCY. An SIFI-degron motif is present at residues 2-17; sequence LGAALRRCAVAATTWA. 2 positions are modified to N6-acetyllysine: K87 and K113. A Phosphothreonine modification is found at T141.

It belongs to the cytochrome c oxidase subunit 5A family. In terms of assembly, component of the cytochrome c oxidase (complex IV, CIV), a multisubunit enzyme composed of 14 subunits. The complex is composed of a catalytic core of 3 subunits MT-CO1, MT-CO2 and MT-CO3, encoded in the mitochondrial DNA, and 11 supernumerary subunits COX4I, COX5A, COX5B, COX6A, COX6B, COX6C, COX7A, COX7B, COX7C, COX8 and NDUFA4, which are encoded in the nuclear genome. The complex exists as a monomer or a dimer and forms supercomplexes (SCs) in the inner mitochondrial membrane with NADH-ubiquinone oxidoreductase (complex I, CI) and ubiquinol-cytochrome c oxidoreductase (cytochrome b-c1 complex, complex III, CIII), resulting in different assemblies (supercomplex SCI(1)III(2)IV(1) and megacomplex MCI(2)III(2)IV(2)). Interacts with AFG1L. Interacts with RAB5IF. In response to mitochondrial stress, the precursor protein is ubiquitinated by the SIFI complex in the cytoplasm before mitochondrial import, leading to its degradation. Within the SIFI complex, UBR4 initiates ubiquitin chain that are further elongated or branched by KCMF1.

Its subcellular location is the mitochondrion inner membrane. Its pathway is energy metabolism; oxidative phosphorylation. In terms of biological role, component of the cytochrome c oxidase, the last enzyme in the mitochondrial electron transport chain which drives oxidative phosphorylation. The respiratory chain contains 3 multisubunit complexes succinate dehydrogenase (complex II, CII), ubiquinol-cytochrome c oxidoreductase (cytochrome b-c1 complex, complex III, CIII) and cytochrome c oxidase (complex IV, CIV), that cooperate to transfer electrons derived from NADH and succinate to molecular oxygen, creating an electrochemical gradient over the inner membrane that drives transmembrane transport and the ATP synthase. Cytochrome c oxidase is the component of the respiratory chain that catalyzes the reduction of oxygen to water. Electrons originating from reduced cytochrome c in the intermembrane space (IMS) are transferred via the dinuclear copper A center (CU(A)) of subunit 2 and heme A of subunit 1 to the active site in subunit 1, a binuclear center (BNC) formed by heme A3 and copper B (CU(B)). The BNC reduces molecular oxygen to 2 water molecules using 4 electrons from cytochrome c in the IMS and 4 protons from the mitochondrial matrix. This chain is Cytochrome c oxidase subunit 5A, mitochondrial (COX5A), found in Symphalangus syndactylus (Siamang).